A 457-amino-acid polypeptide reads, in one-letter code: tRNA (guanine(37)-N(1))-methyltransferase (457 aa).

S-adenosyl-L-methionine is bound by residues His-225, 263-264 (DL), 291-292 (DG), and Asn-358.

The protein belongs to the class I-like SAM-binding methyltransferase superfamily. TRM5/TYW2 family. Monomer.

The protein localises to the mitochondrion matrix. The protein resides in the nucleus. It localises to the cytoplasm. It carries out the reaction guanosine(37) in tRNA + S-adenosyl-L-methionine = N(1)-methylguanosine(37) in tRNA + S-adenosyl-L-homocysteine + H(+). Functionally, specifically methylates the N1 position of guanosine-37 in various cytoplasmic and mitochondrial tRNAs. Methylation is not dependent on the nature of the nucleoside 5' of the target nucleoside. This is the first step in the biosynthesis of wybutosine (yW), a modified base adjacent to the anticodon of tRNAs and required for accurate decoding. The protein is tRNA (guanine(37)-N(1))-methyltransferase of Coprinopsis cinerea (strain Okayama-7 / 130 / ATCC MYA-4618 / FGSC 9003) (Inky cap fungus).